The following is a 183-amino-acid chain: Inner membrane protein p54 (183 aa).

A helical membrane pass occupies residues 32–52; that stretch reads YTILIAIVVLVIIIIVLIYLF. The segment at 81-157 is disordered; it reads EVTPQPGTSK…PYTTVTTQNT (77 aa). Residues 111 to 122 show a composition bias toward polar residues; sequence RPATNKPVTDNP. Positions 130-143 are enriched in low complexity; the sequence is ATGGPAAAPAAASA. Residues 149-161 are interaction with host DYNLL1; it reads YTTVTTQNTASQT.

The protein belongs to the asfivirus envelope protein p54 family. As to quaternary structure, interacts with the host light chain cytoplasmic dynein DYNLL1; this interaction is critical for intracellular microtubule-dependent virus transport toward viral factories.

It is found in the virion membrane. The protein localises to the host cytoplasm. It localises to the host cytoskeleton. Its subcellular location is the host endoplasmic reticulum membrane. In terms of biological role, inner envelope protein involved, through its interaction with host dynein, in the intracellular microtubule-dependent transport of viral capsid toward viral factories. Seems to induce caspase-3 activation and apoptosis. Plays a role in virion morphogenesis by recruiting and transforming the host ER membranes into the precursors of the viral envelope. Involved in virus attachment to the host cell. The sequence is that of Inner membrane protein p54 from Ornithodoros (relapsing fever ticks).